Here is a 184-residue protein sequence, read N- to C-terminus: Adenylate kinase 1 (184 aa).

11 to 16 is a binding site for ATP; sequence GAGKGT. The NMP stretch occupies residues 31–60; the sequence is STGDILRQAMKEQTPLGIKAQSYVDSGELV. Residues Thr32, Arg37, 58–60, 86–89, and Gln93 each bind AMP; these read ELV and GFPR. The tract at residues 127 to 133 is LID; it reads SRGRKDD. Arg128 serves as a coordination point for ATP. The AMP site is built by Arg130 and Arg141. Gln169 lines the ATP pocket.

It belongs to the adenylate kinase family. Monomer.

Its subcellular location is the cytoplasm. It carries out the reaction AMP + ATP = 2 ADP. Its pathway is purine metabolism; AMP biosynthesis via salvage pathway; AMP from ADP: step 1/1. In terms of biological role, catalyzes the reversible transfer of the terminal phosphate group between ATP and AMP. Plays an important role in cellular energy homeostasis and in adenine nucleotide metabolism. In Nostoc sp. (strain PCC 7120 / SAG 25.82 / UTEX 2576), this protein is Adenylate kinase 1.